The primary structure comprises 157 residues: Glutamyl-tRNA(Gln) amidotransferase subunit C, mitochondrial (157 aa).

This sequence belongs to the GatC family. Subunit of the heterotrimeric GatCAB amidotransferase (AdT) complex, composed of A, B and C subunits.

The protein localises to the mitochondrion. It carries out the reaction L-glutamyl-tRNA(Gln) + L-glutamine + ATP + H2O = L-glutaminyl-tRNA(Gln) + L-glutamate + ADP + phosphate + H(+). Its function is as follows. Allows the formation of correctly charged Gln-tRNA(Gln) through the transamidation of misacylated Glu-tRNA(Gln) in the mitochondria. The reaction takes place in the presence of glutamine and ATP through an activated gamma-phospho-Glu-tRNA(Gln). This Drosophila virilis (Fruit fly) protein is Glutamyl-tRNA(Gln) amidotransferase subunit C, mitochondrial.